We begin with the raw amino-acid sequence, 316 residues long: Ribosomal RNA small subunit methyltransferase H (316 aa).

Residues 35 to 37 (GGH), Asp55, Tyr79, Asp100, and Gln107 contribute to the S-adenosyl-L-methionine site.

Belongs to the methyltransferase superfamily. RsmH family.

The protein localises to the cytoplasm. It carries out the reaction cytidine(1402) in 16S rRNA + S-adenosyl-L-methionine = N(4)-methylcytidine(1402) in 16S rRNA + S-adenosyl-L-homocysteine + H(+). In terms of biological role, specifically methylates the N4 position of cytidine in position 1402 (C1402) of 16S rRNA. The polypeptide is Ribosomal RNA small subunit methyltransferase H (Nitrosospira multiformis (strain ATCC 25196 / NCIMB 11849 / C 71)).